The chain runs to 183 residues: Holliday junction branch migration complex subunit RuvA (183 aa).

Residues 1 to 63 (MIVGLIGVVE…EDAHLLYGFL (63 aa)) form a domain I region. The interval 64-141 (EEGEKILFER…IQDETKPMHN (78 aa)) is domain II. Position 141 (Asn141) is a region of interest, flexible linker. Residues 141–183 (NEVFLALESLGFKSAEINKVLKTLKPSLSIEAAIKEALQQLRS) form a domain III region.

The protein belongs to the RuvA family. As to quaternary structure, homotetramer. Forms an RuvA(8)-RuvB(12)-Holliday junction (HJ) complex. HJ DNA is sandwiched between 2 RuvA tetramers; dsDNA enters through RuvA and exits via RuvB. An RuvB hexamer assembles on each DNA strand where it exits the tetramer. Each RuvB hexamer is contacted by two RuvA subunits (via domain III) on 2 adjacent RuvB subunits; this complex drives branch migration. In the full resolvosome a probable DNA-RuvA(4)-RuvB(12)-RuvC(2) complex forms which resolves the HJ.

It localises to the cytoplasm. In terms of biological role, the RuvA-RuvB-RuvC complex processes Holliday junction (HJ) DNA during genetic recombination and DNA repair, while the RuvA-RuvB complex plays an important role in the rescue of blocked DNA replication forks via replication fork reversal (RFR). RuvA specifically binds to HJ cruciform DNA, conferring on it an open structure. The RuvB hexamer acts as an ATP-dependent pump, pulling dsDNA into and through the RuvAB complex. HJ branch migration allows RuvC to scan DNA until it finds its consensus sequence, where it cleaves and resolves the cruciform DNA. The polypeptide is Holliday junction branch migration complex subunit RuvA (Helicobacter pylori (strain G27)).